Reading from the N-terminus, the 308-residue chain is Glycerol-3-phosphate dehydrogenase [NAD(P)+] (308 aa).

Trp-15, Arg-35, Arg-36, and Lys-83 together coordinate NADPH. The sn-glycerol 3-phosphate site is built by Lys-83 and Gly-111. Ser-115 is a binding site for NADPH. Lys-166, Asp-219, Ser-229, Arg-230, and Asn-231 together coordinate sn-glycerol 3-phosphate. Lys-166 serves as the catalytic Proton acceptor. Residue Arg-230 participates in NADPH binding. Residue Glu-256 participates in NADPH binding.

It belongs to the NAD-dependent glycerol-3-phosphate dehydrogenase family.

The protein resides in the cytoplasm. It carries out the reaction sn-glycerol 3-phosphate + NAD(+) = dihydroxyacetone phosphate + NADH + H(+). The enzyme catalyses sn-glycerol 3-phosphate + NADP(+) = dihydroxyacetone phosphate + NADPH + H(+). The protein operates within membrane lipid metabolism; glycerophospholipid metabolism. Functionally, catalyzes the reduction of the glycolytic intermediate dihydroxyacetone phosphate (DHAP) to sn-glycerol 3-phosphate (G3P), the key precursor for phospholipid synthesis. The protein is Glycerol-3-phosphate dehydrogenase [NAD(P)+] of Synechococcus elongatus (strain ATCC 33912 / PCC 7942 / FACHB-805) (Anacystis nidulans R2).